We begin with the raw amino-acid sequence, 249 residues long: 2,3-bisphosphoglycerate-dependent phosphoglycerate mutase (249 aa).

Residues 11–18, 24–25, R63, 90–93, K101, 117–118, and 185–186 each bind substrate; these read RHGNSEWN, TG, ERHY, RR, and GN. The Tele-phosphohistidine intermediate role is filled by H12. E90 serves as the catalytic Proton donor/acceptor.

This sequence belongs to the phosphoglycerate mutase family. BPG-dependent PGAM subfamily.

The catalysed reaction is (2R)-2-phosphoglycerate = (2R)-3-phosphoglycerate. Its pathway is carbohydrate degradation; glycolysis; pyruvate from D-glyceraldehyde 3-phosphate: step 3/5. Catalyzes the interconversion of 2-phosphoglycerate and 3-phosphoglycerate. The sequence is that of 2,3-bisphosphoglycerate-dependent phosphoglycerate mutase from Leifsonia xyli subsp. xyli (strain CTCB07).